Reading from the N-terminus, the 557-residue chain is Potassium-transporting ATPase potassium-binding subunit (557 aa).

A run of 12 helical transmembrane segments spans residues Gly-5–Ser-25, Leu-63–Gly-83, Gly-132–Ile-152, Leu-170–Ile-190, Phe-253–Val-273, Leu-283–Val-303, Val-329–Ala-349, Ala-356–Val-376, Gly-379–Gly-399, Leu-416–Met-436, Leu-484–Ala-504, and Leu-526–Ala-546.

Belongs to the KdpA family. The system is composed of three essential subunits: KdpA, KdpB and KdpC.

Its subcellular location is the cell inner membrane. In terms of biological role, part of the high-affinity ATP-driven potassium transport (or Kdp) system, which catalyzes the hydrolysis of ATP coupled with the electrogenic transport of potassium into the cytoplasm. This subunit binds the periplasmic potassium ions and delivers the ions to the membrane domain of KdpB through an intramembrane tunnel. The sequence is that of Potassium-transporting ATPase potassium-binding subunit from Escherichia coli (strain UTI89 / UPEC).